The primary structure comprises 353 residues: Abasic site processing protein HMCES (353 aa).

Residue Cys2 is the Nucleophile of the active site. At Cys2 the chain carries Thiazolidine linkage to a ring-opened DNA abasic site. Glu127 is an active-site residue. Glycyl lysine isopeptide (Lys-Gly) (interchain with G-Cter in SUMO2) cross-links involve residues Lys148 and Lys151. Ser160 carries the post-translational modification Phosphoserine. Glycyl lysine isopeptide (Lys-Gly) (interchain with G-Cter in SUMO2) cross-links involve residues Lys274 and Lys275. A disordered region spans residues 292–353 (TKSPKKEVPD…DEPMAKKPNS (62 aa)). The residue at position 294 (Ser294) is a Phosphoserine. Basic and acidic residues predominate over residues 295-307 (PKKEVPDSPKKDA). Residue Lys305 forms a Glycyl lysine isopeptide (Lys-Gly) (interchain with G-Cter in SUMO2) linkage. Phosphoserine is present on Ser321. Positions 332–338 (SFLDRWL) match the PIP-box motif. Over residues 336-353 (RWLKQEKEDEPMAKKPNS) the composition is skewed to basic and acidic residues. Glycyl lysine isopeptide (Lys-Gly) (interchain with G-Cter in SUMO2) cross-links involve residues Lys339 and Lys342.

This sequence belongs to the SOS response-associated peptidase family. In terms of assembly, interacts (via PIP-box motif) with PCNA. In terms of tissue distribution, expressed in embryonic stem cells.

The protein resides in the chromosome. With respect to regulation, formation and reversal of DNA-protein cross-link depends on DNA context. Catalyzes formation of the thiazolidine linkage in presence of abasic sites in single-stranded DNA. Mediates the reversal of the thiazolidine cross-link in presence of double stranded DNA. In terms of biological role, sensor of abasic sites in single-stranded DNA (ssDNA) required to preserve genome integrity by promoting error-free repair of abasic sites. Acts as an enzyme that recognizes and binds abasic sites in ssDNA at replication forks and chemically modifies the lesion by forming a covalent cross-link with DNA: forms a stable thiazolidine linkage between a ring-opened abasic site and the alpha-amino and sulfhydryl substituents of its N-terminal catalytic cysteine residue. Promotes error-free repair by protecting abasic sites from translesion synthesis (TLS) polymerases and endonucleases that are error-prone and would generate mutations and double-strand breaks. The HMCES DNA-protein cross-link is then either reversed or degraded. HMCES is able to catalyze the reversal of its thiazolidine cross-link and cycle between a cross-link and a non-cross-linked state depending on DNA context: mediates self-reversal of the thiazolidine cross-link in double stranded DNA, allowing APEX1 to initiate downstream repair of abasic sites. The HMCES DNA-protein cross-link can also be degraded by the SPRTN metalloprotease following unfolding by the BRIP1/FANCJ helicase. Has preference for ssDNA, but can also accommodate double-stranded DNA with 3' or 5' overhang (dsDNA), and dsDNA-ssDNA 3' junction. Plays a protective role during somatic hypermutation of immunoglobulin genes in B-cells: acts via its ability to form covalent cross-links with abasic sites, thereby limiting the accumulation of deletions in somatic hypermutation target regions. Also involved in class switch recombination (CSR) in B-cells independently of the formation of a DNA-protein cross-link: acts by binding and protecting ssDNA overhangs to promote DNA double-strand break repair through the microhomology-mediated alternative-end-joining (Alt-EJ) pathway. Acts as a protease: mediates autocatalytic processing of its N-terminal methionine in order to expose the catalytic cysteine. This is Abasic site processing protein HMCES from Mus musculus (Mouse).